A 622-amino-acid polypeptide reads, in one-letter code: MSTEHKQSLSAVTLAAIGVVYGDIGTSPLYTLRECFSGHYGFDVRPDVVFGFLSLIFWMLILVVSVKYLTYVMRADNAGEGGILTLMSLAGRNTSSRATSILVVLGLIGGSFFYGEVVITPAISVMSAIEGLEIAAPALDPYIVPCSIAVLTLLFVIQKHGTGSVGKLFAPVMLVWFLTLALLGLRSIIANPEVLAALNPKWAISFFVEYKSVSFFALGAVVLAITGVEALYADMGHFGKFPIRLAWFTVVLPSLVLNYFGQGALLLKNPEAIKNPFFLLAPDWALIPLLILATLATVIASQAVISGVFSLTRQAVRLGYLPPMRIIHTSEMESGQIYIPVINWTLYLAVVLVIIGFERSSNLAAAYGIAVTGTMVITSILFCTVAWKNWHWNRFLVAFLLMVLLIIDIPMFSANVLKLFSGGWLPLSLGLVMFIIMTTWKSERFSLLRRMHEHSNSLEAMIASLEKSPPVRVPGTAVYMSRAMNVIPFALLHNLKHNKVLHERVVLLTMRTDDVPYVHNVERVTIEQLSPTFWRVVARYGWRETPNVAEIFHRCGLEGLSCQMMETSFFMSHESLILTKRPWHLFLRGKLFIALSRNALRAPDQFEIPPNRVIELGTQVEI.

12 helical membrane passes run 9 to 29 (LSAVTLAAIGVVYGDIGTSPL), 46 to 66 (PDVVFGFLSLIFWMLILVVSV), 101 to 121 (ILVVLGLIGGSFFYGEVVITP), 137 to 157 (PALDPYIVPCSIAVLTLLFVI), 165 to 185 (VGKLFAPVMLVWFLTLALLGL), 213 to 233 (VSFFALGAVVLAITGVEALYA), 247 to 267 (WFTVVLPSLVLNYFGQGALLL), 276 to 296 (PFFLLAPDWALIPLLILATLA), 337 to 357 (IYIPVINWTLYLAVVLVIIGF), 363 to 383 (LAAAYGIAVTGTMVITSILFC), 395 to 415 (FLVAFLLMVLLIIDIPMFSAN), and 416 to 436 (VLKLFSGGWLPLSLGLVMFII).

Belongs to the HAK/KUP transporter (TC 2.A.72) family.

The protein localises to the cell inner membrane. It carries out the reaction K(+)(in) + H(+)(in) = K(+)(out) + H(+)(out). Functionally, responsible for the low-affinity transport of potassium into the cell. Likely operates as a K(+):H(+) symporter. The protein is Low affinity potassium transport system protein Kup of Yersinia pseudotuberculosis serotype O:1b (strain IP 31758).